We begin with the raw amino-acid sequence, 1152 residues long: DNA-directed RNA polymerase subunit beta' (1152 aa).

Residues Cys60, Cys62, Cys75, and Cys78 each contribute to the Zn(2+) site. Mg(2+) is bound by residues Asp449, Asp451, and Asp453. Residues Cys779, Cys853, Cys860, and Cys863 each contribute to the Zn(2+) site.

Belongs to the RNA polymerase beta' chain family. In terms of assembly, the RNAP catalytic core consists of 2 alpha, 1 beta, 1 beta' and 1 omega subunit. When a sigma factor is associated with the core the holoenzyme is formed, which can initiate transcription. Requires Mg(2+) as cofactor. Zn(2+) serves as cofactor.

The enzyme catalyses RNA(n) + a ribonucleoside 5'-triphosphate = RNA(n+1) + diphosphate. Functionally, DNA-dependent RNA polymerase catalyzes the transcription of DNA into RNA using the four ribonucleoside triphosphates as substrates. The protein is DNA-directed RNA polymerase subunit beta' of Carboxydothermus hydrogenoformans (strain ATCC BAA-161 / DSM 6008 / Z-2901).